We begin with the raw amino-acid sequence, 423 residues long: Serine hydroxymethyltransferase (423 aa).

(6S)-5,6,7,8-tetrahydrofolate is bound at residue 121–123 (GHI). The residue at position 227 (K227) is an N6-(pyridoxal phosphate)lysine. (6S)-5,6,7,8-tetrahydrofolate is bound at residue E242.

It belongs to the SHMT family. As to quaternary structure, homodimer. Pyridoxal 5'-phosphate serves as cofactor.

The protein resides in the cytoplasm. It catalyses the reaction 5,10-methylenetetrahydromethanopterin + glycine + H2O = 5,6,7,8-tetrahydromethanopterin + L-serine. Its pathway is amino-acid biosynthesis; glycine biosynthesis; glycine from L-serine: step 1/1. Its function is as follows. Catalyzes the reversible interconversion of serine and glycine with tetrahydromethanopterin (H4MPT) serving as the one-carbon carrier. Cannot use tetrahydrofolate (THF or H4PteGlu) instead of H4MPT as the pteridine substrate. Also probably exhibits a pteridine-independent aldolase activity toward beta-hydroxyamino acids, producing glycine and aldehydes, via a retro-aldol mechanism. This chain is Serine hydroxymethyltransferase, found in Methanothermobacter thermautotrophicus (strain ATCC 29096 / DSM 1053 / JCM 10044 / NBRC 100330 / Delta H) (Methanobacterium thermoautotrophicum).